We begin with the raw amino-acid sequence, 80 residues long: MATWLAILLIIVALIGGLVGGFFLARKYMMDYLKKNPPINEEMLRMMMMQMGQKPSQKKINQMMTMMNKNMDQNMKSSKK.

Residues 4-24 form a helical membrane-spanning segment; the sequence is WLAILLIIVALIGGLVGGFFL.

This sequence belongs to the UPF0154 family.

It is found in the membrane. The chain is UPF0154 protein SH1564 from Staphylococcus haemolyticus (strain JCSC1435).